Reading from the N-terminus, the 211-residue chain is Small ribosomal subunit protein uS3 (211 aa).

In terms of domain architecture, KH type-2 spans 16–85; the sequence is IDEYFKTKLV…NPQIEVKQVE (70 aa).

This sequence belongs to the universal ribosomal protein uS3 family. In terms of assembly, part of the 30S ribosomal subunit.

Functionally, binds the lower part of the 30S subunit head. This Methanococcus maripaludis (strain C5 / ATCC BAA-1333) protein is Small ribosomal subunit protein uS3.